We begin with the raw amino-acid sequence, 83 residues long: CLAVATA3/ESR (CLE)-related protein 3 (83 aa).

The first 24 residues, 1–24 (MASLKLWVCLVLLLVLELTSVHEC), serve as a signal peptide directing secretion. Residues 38–58 (RLKKIRRELFERLKEMKGRSE) adopt a coiled-coil conformation. The segment at 53–83 (MKGRSEGEETILGNTLDSKRLSPGGPDPRHH) is disordered. 2 positions are modified to hydroxyproline: P75 and P78. An O-linked (Ara...) hydroxyproline glycan is attached at P78.

It belongs to the CLV3/ESR signal peptide family. The O-glycosylation (arabinosylation) of the hydroxyproline Pro-78 enhances binding affinity of the CLE3p peptide for its receptor. Mostly expressed in roots, stems and apex, and, to a lower extent, in seedlings, leaves, flowers, siliques and pollen.

The protein localises to the secreted. It localises to the extracellular space. In terms of biological role, extracellular signal peptide that regulates cell fate. This is CLAVATA3/ESR (CLE)-related protein 3 from Arabidopsis thaliana (Mouse-ear cress).